Reading from the N-terminus, the 1427-residue chain is Vacuolar protein sorting-associated protein 8 homolog (1427 aa).

Ser26, Ser32, and Ser127 each carry phosphoserine. The stretch at 193-234 (VGGQYGAISALSINNDCSRLLCGFAKGQITMWDLASGKLLRS) is one WD repeat. The RING-type; atypical zinc finger occupies 1257–1309 (CSICLQQYKRRQEMADEIIVFSCGHLYHSFCLQSKECTLEVEGQTRWACHKCS). The interval 1311-1355 (SNKAGKLSENPSENKKGRITSSQVKMSPSYHQSKGDPPARKANSE) is disordered. A compositionally biased stretch (polar residues) spans 1329–1342 (ITSSQVKMSPSYHQ). Residues 1343–1353 (SKGDPPARKAN) are compositionally biased toward basic and acidic residues.

The protein belongs to the VPS8 family. In terms of assembly, interacts with RAB5C. Interacts with TGFBRAP1. Component of the putative class C core vacuole/endosome tethering (CORVET) complex; the core of which is composed of the class C Vps proteins VPS11, VPS16, VPS18 and VPS33A, associated with VPS8 and TGFBRAP1.

Its function is as follows. Plays a role in vesicle-mediated protein trafficking of the endocytic membrane transport pathway. Believed to act as a component of the putative CORVET endosomal tethering complexes which is proposed to be involved in the Rab5-to-Rab7 endosome conversion probably implicating MON1A/B, and via binding SNAREs and SNARE complexes to mediate tethering and docking events during SNARE-mediated membrane fusion. The CORVET complex is proposed to function as a Rab5 effector to mediate early endosome fusion probably in specific endosome subpopulations. Functions predominantly in APPL1-containing endosomes. The polypeptide is Vacuolar protein sorting-associated protein 8 homolog (Vps8) (Mus musculus (Mouse)).